The chain runs to 509 residues: Cytochrome P450 4X1 (509 aa).

The helical transmembrane segment at 14–34 (FYLAFVFCLALGLLQAIKLYL) threads the bilayer. Cysteine 454 provides a ligand contact to heme.

This sequence belongs to the cytochrome P450 family. Heme is required as a cofactor. Expressed in brain, heart, kidney and skin and, at lower levels, in skeletal muscle and liver. In the brain, high levels are detected in amygdala and lower levels in globus pallidus and cerebellum. In the heart, very high levels in aorta, but very low levels in other heart regions. Also expressed in breast, prostate and colon.

The protein localises to the endoplasmic reticulum membrane. It localises to the microsome membrane. The catalysed reaction is N-(5Z,8Z,11Z,14Z-eicosatetraenoyl)-ethanolamine + reduced [NADPH--hemoprotein reductase] + O2 = N-(14,15-epoxy-5Z,8Z,11Z-eicosatrienoyl)-ethanolamine + oxidized [NADPH--hemoprotein reductase] + H2O + H(+). A cytochrome P450 monooxygenase that selectively catalyzes the epoxidation of the last double bond of the arachidonoyl moiety of anandamide, potentially modulating endocannabinoid signaling. Has no hydroxylase activity toward various fatty acids, steroids and prostaglandins. Mechanistically, uses molecular oxygen inserting one oxygen atom into a substrate, and reducing the second into a water molecule, with two electrons provided by NADPH via cytochrome P450 reductase (CPR; NADPH-ferrihemoprotein reductase). This is Cytochrome P450 4X1 from Homo sapiens (Human).